The sequence spans 632 residues: Arginine--tRNA ligase (632 aa).

Positions 129-139 (ANPVHPLHVGS) match the 'HIGH' region motif.

The protein belongs to the class-I aminoacyl-tRNA synthetase family.

It localises to the cytoplasm. The enzyme catalyses tRNA(Arg) + L-arginine + ATP = L-arginyl-tRNA(Arg) + AMP + diphosphate. In Korarchaeum cryptofilum (strain OPF8), this protein is Arginine--tRNA ligase.